Reading from the N-terminus, the 293-residue chain is Ethanolamine ammonia-lyase small subunit (293 aa).

2 residues coordinate adenosylcob(III)alamin: valine 207 and glutamate 228.

It belongs to the EutC family. In terms of assembly, the basic unit is a heterodimer which dimerizes to form tetramers. The heterotetramers trimerize; 6 large subunits form a core ring with 6 small subunits projecting outwards. Adenosylcob(III)alamin serves as cofactor.

It localises to the bacterial microcompartment. The catalysed reaction is ethanolamine = acetaldehyde + NH4(+). Its pathway is amine and polyamine degradation; ethanolamine degradation. Functionally, catalyzes the deamination of various vicinal amino-alcohols to oxo compounds. Allows this organism to utilize ethanolamine as the sole source of nitrogen and carbon in the presence of external vitamin B12. This chain is Ethanolamine ammonia-lyase small subunit, found in Listeria monocytogenes serotype 4b (strain CLIP80459).